A 148-amino-acid polypeptide reads, in one-letter code: Small ribosomal subunit protein bS16 (148 aa).

The disordered stretch occupies residues 106–148 (QAAARAAAGAEDRPATTPKKAKKSGSAEEAEAAPATDAPAAGQ). The segment covering 137–148 (AAPATDAPAAGQ) has biased composition (low complexity).

Belongs to the bacterial ribosomal protein bS16 family.

The sequence is that of Small ribosomal subunit protein bS16 from Frankia casuarinae (strain DSM 45818 / CECT 9043 / HFP020203 / CcI3).